A 62-amino-acid polypeptide reads, in one-letter code: Phylloseptin-Az7 (62 aa).

Positions 1-19 are cleaved as a signal peptide; that stretch reads LKKSLFLVLFLGLVSLSIC. Positions 20–40 are excised as a propeptide; sequence EEEKRETEEKENEQEDDKSEE. The residue at position 61 (Phe-61) is a Phenylalanine amide.

It belongs to the frog skin active peptide (FSAP) family. Phylloseptin subfamily. In terms of tissue distribution, expressed by the skin glands.

Its subcellular location is the secreted. In terms of biological role, has antimicrobial activity. This is Phylloseptin-Az7 (psn15) from Pithecopus azureus (Orange-legged monkey tree frog).